A 438-amino-acid polypeptide reads, in one-letter code: Trigger factor (438 aa).

Residues 163-248 enclose the PPIase FKBP-type domain; that stretch reads GDTAIIDFAG…VKEIKRKEIA (86 aa).

This sequence belongs to the FKBP-type PPIase family. Tig subfamily.

It is found in the cytoplasm. It carries out the reaction [protein]-peptidylproline (omega=180) = [protein]-peptidylproline (omega=0). Functionally, involved in protein export. Acts as a chaperone by maintaining the newly synthesized protein in an open conformation. Functions as a peptidyl-prolyl cis-trans isomerase. This chain is Trigger factor, found in Pelotomaculum thermopropionicum (strain DSM 13744 / JCM 10971 / SI).